Here is a 340-residue protein sequence, read N- to C-terminus: MKALVFEAPERAVLTHRDIPAPAPGEALVRVAYNSVCGSDLSFYKGVWHGFTYPVVPGHEWSGSVVDVNGPRGADLVGRNVVGDLTCSCGTCAHCAAGTPTLCEDLGELGFTRDGACAEYMTVPVANLRPLPDTLPLRTACQVEPLAVALNAVDRLGVTPGEKVAVMGAGGIGLLLVQAVRLRGGTVTAVAEPVPERRAAALALGVPAAVGGDPGALVELTRSDPAAVPDVVLEASGYPTAVQEAVEAVRPGGRVGLVGYRIEEAAVMAPHHIVLKVLTVRASMGPGTRFEEAVDVLASGAVDVDALLSHEFALDDYAKALDVALRRADGNTRSYFNLRA.

7 residues coordinate Zn(2+): Cys-37, His-59, Cys-89, Cys-92, Cys-95, Cys-103, and Glu-144.

This sequence belongs to the zinc-containing alcohol dehydrogenase family. DOIA dehydrogenase subfamily. Zn(2+) is required as a cofactor.

It catalyses the reaction 2-deoxy-scyllo-inosamine + NADP(+) = 3-amino-2,3-dideoxy-scyllo-inosose + NADPH + H(+). The enzyme catalyses 2-deoxy-scyllo-inosamine + NAD(+) = 3-amino-2,3-dideoxy-scyllo-inosose + NADH + H(+). Its pathway is metabolic intermediate biosynthesis; 2-deoxystreptamine biosynthesis; 2-deoxystreptamine from D-glucose 6-phosphate: step 3/4. It functions in the pathway antibiotic biosynthesis; neomycin biosynthesis. Functionally, catalyzes the oxidation of 2-deoxy-scyllo-inosamine (DOIA) with NAD(+) or NADP(+), forming 3-amino-2,3-dideoxy-scyllo-inosose (amino-DOI). This Streptomyces fradiae (Streptomyces roseoflavus) protein is 2-deoxy-scyllo-inosamine dehydrogenase (neoA).